The primary structure comprises 199 residues: ParB-like protein Saci_1498 (199 aa).

This sequence belongs to the ParB family.

Its function is as follows. Probably part of a 4-gene DNA damage response locus in which the upstream ups system, in combination with this downstream locus, functions in homologous recombination to rescue Sulfolobales from DNA-damaging threats. This protein might function in the DNA transfer machinery. In Sulfolobus acidocaldarius (strain ATCC 33909 / DSM 639 / JCM 8929 / NBRC 15157 / NCIMB 11770), this protein is ParB-like protein Saci_1498.